The following is a 334-amino-acid chain: Aspartate carbamoyltransferase catalytic subunit (334 aa).

The carbamoyl phosphate site is built by R70 and T71. L-aspartate is bound at residue K98. The carbamoyl phosphate site is built by R120, H150, and Q153. Residues R183 and R239 each coordinate L-aspartate. Carbamoyl phosphate is bound by residues G280 and P281.

This sequence belongs to the aspartate/ornithine carbamoyltransferase superfamily. ATCase family. As to quaternary structure, heterododecamer (2C3:3R2) of six catalytic PyrB chains organized as two trimers (C3), and six regulatory PyrI chains organized as three dimers (R2).

It carries out the reaction carbamoyl phosphate + L-aspartate = N-carbamoyl-L-aspartate + phosphate + H(+). Its pathway is pyrimidine metabolism; UMP biosynthesis via de novo pathway; (S)-dihydroorotate from bicarbonate: step 2/3. Catalyzes the condensation of carbamoyl phosphate and aspartate to form carbamoyl aspartate and inorganic phosphate, the committed step in the de novo pyrimidine nucleotide biosynthesis pathway. The chain is Aspartate carbamoyltransferase catalytic subunit from Pseudomonas aeruginosa (strain LESB58).